A 152-amino-acid chain; its full sequence is uncharacterized protein (152 aa).

Helical transmembrane passes span 13 to 33 (LLWF…LLFF), 38 to 58 (LIVE…SLFM), and 69 to 89 (WVIF…FFVI).

It localises to the cell membrane. This is an uncharacterized protein from Mycoplasma pneumoniae (strain ATCC 29342 / M129 / Subtype 1) (Mycoplasmoides pneumoniae).